Reading from the N-terminus, the 1162-residue chain is Integrin alpha-L (1162 aa).

The first 23 residues, 1 to 23 (MSFRIAGPRLLLLGLQLFAKAWS), serve as a signal peptide directing secretion. Over 24-1088 (YNLDTRPTQS…DLIHEKEMLH (1065 aa)) the chain is Extracellular. FG-GAP repeat units follow at residues 28-79 (TRPT…FCQP) and 80-138 (VSLH…GPML). A disulfide bridge links Cys-70 with Cys-77. An N-linked (GlcNAc...) asparagine glycan is attached at Asn-86. Cystine bridges form between Cys-108-Cys-126 and Cys-147-Cys-199. Residues 153–325 (DLVFLFDGSQ…EKLKDLFTDL (173 aa)) form the VWFA domain. 2 N-linked (GlcNAc...) asparagine glycosylation sites follow: Asn-185 and Asn-270. 5 FG-GAP repeats span residues 336–387 (NRQD…GATF), 390–443 (QEPL…GGRW), 444–504 (NQTQ…LFEM), 505–561 (VSEL…GLSP), and 565–625 (QRIQ…FSPE). Residue Asn-444 is glycosylated (N-linked (GlcNAc...) asparagine). Residues Asp-466, Asp-468, Asp-470, Glu-474, Asp-528, Asn-530, Asp-532, Asp-536, Asp-588, Asp-592, and Asp-596 each contribute to the Ca(2+) site. A disulfide bridge connects residues Cys-651 and Cys-705. Asn-668, Asn-696, Asn-724, and Asn-728 each carry an N-linked (GlcNAc...) asparagine glycan. An intrachain disulfide couples Cys-768 to Cys-774. The N-linked (GlcNAc...) asparagine glycan is linked to Asn-777. The cysteines at positions 841 and 857 are disulfide-linked. Residues Asn-858, Asn-881, Asn-891, Asn-900, and Asn-928 are each glycosylated (N-linked (GlcNAc...) asparagine). 2 disulfide bridges follow: Cys-994–Cys-1010 and Cys-1018–Cys-1049. Asn-1057 carries N-linked (GlcNAc...) asparagine glycosylation. A helical membrane pass occupies residues 1089–1109 (VYVLSGIGGLVLLFLIFLALY). The Cytoplasmic portion of the chain corresponds to 1110–1162 (KVGFFKRNLKEKMEADGGVPNGSPPEDTDPLAVPGEETKDMGCLEPLRESDKD). The GFFKR motif signature appears at 1112–1116 (GFFKR). The disordered stretch occupies residues 1124 to 1162 (ADGGVPNGSPPEDTDPLAVPGEETKDMGCLEPLRESDKD). Positions 1145 to 1162 (EETKDMGCLEPLRESDKD) are enriched in basic and acidic residues.

The protein belongs to the integrin alpha chain family. Heterodimer of an alpha and a beta subunit. The ITGAL alpha subunit associates with the ITGB2 beta subunit. Interacts with THBD. Interacts with CD226. Post-translationally, in resting T-cells, up to 40% of surface ITGAL is constitutively phosphorylated. Phosphorylation causes conformational changes needed for ligand binding and is necessary for the activation by some physiological agents. As to expression, leukocytes.

It is found in the cell membrane. Integrin ITGAL/ITGB2 is a receptor for ICAM1, ICAM2, ICAM3 and ICAM4. Integrin ITGAL/ITGB2 is a receptor for F11R. Integrin ITGAL/ITGB2 is a receptor for the secreted form of ubiquitin-like protein ISG15; the interaction is mediated by ITGAL. Involved in a variety of immune phenomena including leukocyte-endothelial cell interaction, cytotoxic T-cell mediated killing, and antibody dependent killing by granulocytes and monocytes. Contributes to natural killer cell cytotoxicity. Involved in leukocyte adhesion and transmigration of leukocytes including T-cells and neutrophils. Acts as a platform at the immunological synapse to translate TCR engagement and density of the ITGAL ligand ICAM1 into graded adhesion. Required for generation of common lymphoid progenitor cells in bone marrow, indicating the role in lymphopoiesis. Integrin ITGAL/ITGB2 in association with ICAM3, contributes to apoptotic neutrophil phagocytosis by macrophages. In Mus musculus (Mouse), this protein is Integrin alpha-L.